The primary structure comprises 585 residues: Arginine--tRNA ligase (585 aa).

The 'HIGH' region signature appears at 131–141 (ANPTGPMHVGH).

The protein belongs to the class-I aminoacyl-tRNA synthetase family. In terms of assembly, monomer.

Its subcellular location is the cytoplasm. It carries out the reaction tRNA(Arg) + L-arginine + ATP = L-arginyl-tRNA(Arg) + AMP + diphosphate. The protein is Arginine--tRNA ligase of Brucella abortus (strain S19).